We begin with the raw amino-acid sequence, 313 residues long: Ribosomal RNA small subunit methyltransferase H (313 aa).

S-adenosyl-L-methionine-binding positions include 35–37, Asp-55, Phe-79, Asp-101, and Gln-108; that span reads GGH.

Belongs to the methyltransferase superfamily. RsmH family.

It localises to the cytoplasm. The enzyme catalyses cytidine(1402) in 16S rRNA + S-adenosyl-L-methionine = N(4)-methylcytidine(1402) in 16S rRNA + S-adenosyl-L-homocysteine + H(+). Specifically methylates the N4 position of cytidine in position 1402 (C1402) of 16S rRNA. The protein is Ribosomal RNA small subunit methyltransferase H of Salmonella agona (strain SL483).